We begin with the raw amino-acid sequence, 275 residues long: 4-hydroxy-tetrahydrodipicolinate reductase (275 aa).

NAD(+)-binding positions include 13–18 and 108–110; these read GAAGKM and GTT. His164 functions as the Proton donor/acceptor in the catalytic mechanism. (S)-2,3,4,5-tetrahydrodipicolinate is bound at residue His165. The active-site Proton donor is Lys168. Residue 174–175 coordinates (S)-2,3,4,5-tetrahydrodipicolinate; it reads GT.

This sequence belongs to the DapB family.

Its subcellular location is the cytoplasm. The enzyme catalyses (S)-2,3,4,5-tetrahydrodipicolinate + NAD(+) + H2O = (2S,4S)-4-hydroxy-2,3,4,5-tetrahydrodipicolinate + NADH + H(+). The catalysed reaction is (S)-2,3,4,5-tetrahydrodipicolinate + NADP(+) + H2O = (2S,4S)-4-hydroxy-2,3,4,5-tetrahydrodipicolinate + NADPH + H(+). It functions in the pathway amino-acid biosynthesis; L-lysine biosynthesis via DAP pathway; (S)-tetrahydrodipicolinate from L-aspartate: step 4/4. In terms of biological role, catalyzes the conversion of 4-hydroxy-tetrahydrodipicolinate (HTPA) to tetrahydrodipicolinate. In Rippkaea orientalis (strain PCC 8801 / RF-1) (Cyanothece sp. (strain PCC 8801)), this protein is 4-hydroxy-tetrahydrodipicolinate reductase.